A 255-amino-acid polypeptide reads, in one-letter code: Tritrans,polycis-undecaprenyl-diphosphate synthase (geranylgeranyl-diphosphate specific) (255 aa).

Asp-34 is an active-site residue. Residue Asp-34 participates in Mg(2+) binding. Residues 35-38 (GNRR), His-51, and 79-81 (STE) contribute to the substrate site. The active-site Proton acceptor is Asn-82. Substrate-binding positions include Phe-83, Arg-85, Arg-204, and 210-212 (RIS). Glu-223 is a Mg(2+) binding site.

It belongs to the UPP synthase family. As to quaternary structure, homodimer. Mg(2+) serves as cofactor.

The catalysed reaction is geranylgeranyl diphosphate + 7 isopentenyl diphosphate = tri-trans,hepta-cis-undecaprenyl diphosphate + 7 diphosphate. Catalyzes the sequential condensation of isopentenyl diphosphate (IPP) with geranylgeranyl diphosphate (GGPP) to yield (2Z,6Z,10Z,14Z,18Z,22Z,26Z,30E,34E,38E)-undecaprenyl diphosphate (tritrans,heptacis-UPP). It is probably the precursor of glycosyl carrier lipids. The sequence is that of Tritrans,polycis-undecaprenyl-diphosphate synthase (geranylgeranyl-diphosphate specific) from Picrophilus torridus (strain ATCC 700027 / DSM 9790 / JCM 10055 / NBRC 100828 / KAW 2/3).